A 224-amino-acid polypeptide reads, in one-letter code: UPF0758 protein lmo1549 (224 aa).

One can recognise an MPN domain in the interval 102 to 224 (VVRCPEDAVK…YISLKEKGYF (123 aa)). 3 residues coordinate Zn(2+): H173, H175, and D186. A JAMM motif motif is present at residues 173–186 (HNHPSGDPTPSSED).

It belongs to the UPF0758 family.

In Listeria monocytogenes serovar 1/2a (strain ATCC BAA-679 / EGD-e), this protein is UPF0758 protein lmo1549.